A 478-amino-acid chain; its full sequence is Endoglucanase 18 (478 aa).

An N-terminal signal peptide occupies residues 1 to 21; that stretch reads MGKLLVVMLIGMFLAFESLEA. Residue asparagine 29 is glycosylated (N-linked (GlcNAc...) asparagine). The active-site Nucleophile is aspartate 76. Residue histidine 398 is part of the active site. The segment at 433–452 is disordered; it reads HTGAIVGGPNSSDQYSDKRT. Asparagine 442 is a glycosylation site (N-linked (GlcNAc...) asparagine). Active-site residues include aspartate 449 and glutamate 458.

This sequence belongs to the glycosyl hydrolase 9 (cellulase E) family.

It localises to the secreted. It carries out the reaction Endohydrolysis of (1-&gt;4)-beta-D-glucosidic linkages in cellulose, lichenin and cereal beta-D-glucans.. This is Endoglucanase 18 from Arabidopsis thaliana (Mouse-ear cress).